We begin with the raw amino-acid sequence, 369 residues long: MGLAAAKNKRKLGTDPNNTKWSRNETTFGQKILRAQGWQPGEFLGAKDAAHAVHHTEASSSHIKVTLKDDNLGLGAKRNNGDECTGLFDFQHLLGRLNGKSEDVLEAEKQKRENHIRNHYLEQKIGTIRFVRGGWLVGDVVKEKVTEEDGVPQSDTVDQQVETVPSQDTKDAEPTKRKSKKRKADSDEEDEKEEKKDKKVKKRKTDTEAETDSESSRSKKKEKKDKKEKKDQKEKKDKKDKRKLKDAKQSEESSSDDLESSATETKKSKKDKKKEKKEKKDKKKDKKEKKRKEKELSDSATESEDSKSKAQKRTKDGAEIETSTPGGSGTSTPTVTSSTRFLARQRFIAQKKMAFTDSAALNQIFMIKS.

Residues 1–23 form a disordered region; sequence MGLAAAKNKRKLGTDPNNTKWSR. Residues 25 to 79 form the G-patch domain; it reads ETTFGQKILRAQGWQPGEFLGAKDAAHAVHHTEASSSHIKVTLKDDNLGLGAKRN. The tract at residues 147–338 is disordered; that stretch reads EEDGVPQSDT…GTSTPTVTSS (192 aa). Polar residues predominate over residues 153-167; the sequence is QSDTVDQQVETVPSQ. Over residues 218 to 227 the composition is skewed to basic residues; that stretch reads SKKKEKKDKK. Positions 228–237 are enriched in basic and acidic residues; the sequence is EKKDQKEKKD. The segment covering 267-292 has biased composition (basic residues); the sequence is KSKKDKKKEKKEKKDKKKDKKEKKRK. A compositionally biased stretch (basic and acidic residues) spans 304 to 318; the sequence is EDSKSKAQKRTKDGA. Over residues 322-338 the composition is skewed to low complexity; the sequence is TSTPGGSGTSTPTVTSS.

Belongs to the PINX1 family.

The protein localises to the nucleus. It is found in the nucleolus. Functionally, involved in rRNA-processing at A0, A1 and A2 sites and negatively regulates telomerase. This chain is Protein pxr-1 (pxr-1), found in Neurospora crassa (strain ATCC 24698 / 74-OR23-1A / CBS 708.71 / DSM 1257 / FGSC 987).